We begin with the raw amino-acid sequence, 767 residues long: Cadherin-5 (767 aa).

The signal sequence occupies residues 1–29 (MMKQCARRQMTEPVFRVAVLLALCSLSIG). Positions 30–51 (VDVHQAQKTPSISSAALQRHKR) are excised as a propeptide. At 30–593 (VDVHQAQKTP…SYARTGMSVS (564 aa)) the chain is on the extracellular side. Residues Glu62, Glu63, Asp113, and Glu115 each contribute to the Ca(2+) site. Cadherin domains lie at 86–155 (RYIL…IPVF), 155–261 (FDSD…IATF), 262–373 (KKER…PPIF), 374–475 (NQTE…APEL), and 475–581 (LTNG…RVEY). An N-linked (GlcNAc...) asparagine glycan is attached at Asn121. Ca(2+) contacts are provided by Asp147, Ile148, Asn149, Asp150, Asn151, Asp180, and Asp182. Residue Asn197 is glycosylated (N-linked (GlcNAc...) asparagine). Residue Asp233 coordinates Ca(2+). Residues Asn374, Asn477, and Asn518 are each glycosylated (N-linked (GlcNAc...) asparagine). Residues 594–614 (ALLAILLCIITILVIVILIVL) form a helical membrane-spanning segment. Residues 615-767 (RRRYQKEVLV…VDGSDSDSSY (153 aa)) are Cytoplasmic-facing.

Its subcellular location is the cell membrane. It is found in the cell junction. It localises to the adherens junction. Its function is as follows. Cadherins are calcium-dependent cell adhesion proteins. They preferentially interact with themselves in a homophilic manner in connecting cells; cadherins may thus contribute to the sorting of heterogeneous cell types. Required for embryonic cardiac looping and heart chamber development, via promotion of cell-cell junction formation and subsequent attachment between the endothelial and myocardial layers of the heart. Required for the directional migration and delamination of endothelial cell monolayers, by which common cardinal veins form via the lumen ensheathment mechanism of vessel development as they migrate and connect with the heart inflow tract. Required for the formation of filopodia extensions (sprouts) at the initiation of intersegmental vessel development, by acting (via its C-terminus) to facilitate anchoring of the actin cytoskeleton to cell junctions in endothelial cells. Then positively regulates dorsal migration of stalk cells and sprout outgrowth towards the dorsal longitudinal anastomotic vessels (DLAV) via endothelial cell elongation. Following contact with the DLAV, required for intersegmental vessel lumen formation, potentially via facilitating the formation and/or extension of endothelial cell tight junctions that are required during tubulogenesis. The sequence is that of Cadherin-5 from Danio rerio (Zebrafish).